The sequence spans 393 residues: Reticulon-like protein 2 (393 aa).

A compositionally biased stretch (low complexity) spans 1-21; it reads MNRNTTTNKNANLNNSRNANA. Positions 1 to 25 are disordered; the sequence is MNRNTTTNKNANLNNSRNANAPGEA. Residues 1–60 lie on the Cytoplasmic side of the membrane; it reads MNRNTTTNKNANLNNSRNANAPGEAGHQNKTGLIYWTNPSKSGASFAATLVSLLILRNVN. In terms of domain architecture, Reticulon spans 30–236; it reads KTGLIYWTNP…SISNENKSST (207 aa). Residues 61-81 form a helical membrane-spanning segment; that stretch reads VISVLLKIGYMVLFTSFAVEL. The Lumenal segment spans residues 82–149; the sequence is STKVLFDKGV…IGVSLYFLHG (68 aa). Asn-137 is a glycosylation site (N-linked (GlcNAc...) asparagine). Residues 150 to 170 form a helical membrane-spanning segment; the sequence is LFAIFSMNTVLIMTTIFLYTV. Residues 171–393 are Cytoplasmic-facing; it reads PLIYDRKQAR…HGLKQKLQHA (223 aa). Disordered regions lie at residues 214–313 and 339–393; these read IIPP…DVKT and GDYN…LQHA. Over residues 220–285 the composition is skewed to polar residues; the sequence is DEGSYSTSIS…PVSQNENIGT (66 aa). Ser-278 is subject to Phosphoserine. Residues 289 to 313 show a composition bias toward basic and acidic residues; it reads GKQEIPTEKDFNNRHENFSKPDVKT. Residues 365–376 are compositionally biased toward polar residues; that stretch reads PAESQSIPIKNN. Residues 381–393 show a composition bias toward basic residues; it reads KTTHGLKQKLQHA.

Its subcellular location is the endoplasmic reticulum membrane. This Saccharomyces cerevisiae (strain ATCC 204508 / S288c) (Baker's yeast) protein is Reticulon-like protein 2 (RTN2).